A 497-amino-acid polypeptide reads, in one-letter code: Glutamyl-tRNA(Gln) amidotransferase subunit A (497 aa).

Active-site charge relay system residues include K91 and S166. The segment at 143–171 is disordered; sequence SSTENSAYGPTHNPWDLERTAGGSGGGSS. S190 serves as the catalytic Acyl-ester intermediate.

The protein belongs to the amidase family. GatA subfamily. As to quaternary structure, heterotrimer of A, B and C subunits.

The enzyme catalyses L-glutamyl-tRNA(Gln) + L-glutamine + ATP + H2O = L-glutaminyl-tRNA(Gln) + L-glutamate + ADP + phosphate + H(+). Allows the formation of correctly charged Gln-tRNA(Gln) through the transamidation of misacylated Glu-tRNA(Gln) in organisms which lack glutaminyl-tRNA synthetase. The reaction takes place in the presence of glutamine and ATP through an activated gamma-phospho-Glu-tRNA(Gln). This Corynebacterium glutamicum (strain ATCC 13032 / DSM 20300 / JCM 1318 / BCRC 11384 / CCUG 27702 / LMG 3730 / NBRC 12168 / NCIMB 10025 / NRRL B-2784 / 534) protein is Glutamyl-tRNA(Gln) amidotransferase subunit A.